Here is an 860-residue protein sequence, read N- to C-terminus: DNA mismatch repair protein MutS (860 aa).

ATP is bound at residue 607–614 (GPNMSGKS).

The protein belongs to the DNA mismatch repair MutS family.

In terms of biological role, this protein is involved in the repair of mismatches in DNA. It is possible that it carries out the mismatch recognition step. This protein has a weak ATPase activity. This is DNA mismatch repair protein MutS from Listeria monocytogenes serovar 1/2a (strain ATCC BAA-679 / EGD-e).